A 98-amino-acid polypeptide reads, in one-letter code: Co-chaperonin GroES (98 aa).

The protein belongs to the GroES chaperonin family. As to quaternary structure, heptamer of 7 subunits arranged in a ring. Interacts with the chaperonin GroEL.

Its subcellular location is the cytoplasm. In terms of biological role, together with the chaperonin GroEL, plays an essential role in assisting protein folding. The GroEL-GroES system forms a nano-cage that allows encapsulation of the non-native substrate proteins and provides a physical environment optimized to promote and accelerate protein folding. GroES binds to the apical surface of the GroEL ring, thereby capping the opening of the GroEL channel. This chain is Co-chaperonin GroES, found in Corynebacterium diphtheriae (strain ATCC 700971 / NCTC 13129 / Biotype gravis).